We begin with the raw amino-acid sequence, 145 residues long: MIRSKRKINKLRGSRSNGGGCTKKRRGAGNKGGRGNAGASKQHWTWTAKFDPDHYGKHGFKRPQKMIKKVNPVNLSYLEEQADNLIESGKASKDGDSIVIDVTELGYDKVLAKGKITKSFIISAPQFSASAIEKIEEMGGEAIEL.

Residues 1–13 are compositionally biased toward basic residues; it reads MIRSKRKINKLRG. A disordered region spans residues 1 to 44; it reads MIRSKRKINKLRGSRSNGGGCTKKRRGAGNKGGRGNAGASKQHW.

The protein belongs to the universal ribosomal protein uL15 family. In terms of assembly, part of the 50S ribosomal subunit.

Its function is as follows. Binds to the 23S rRNA. This chain is Large ribosomal subunit protein uL15, found in Methanobrevibacter smithii (strain ATCC 35061 / DSM 861 / OCM 144 / PS).